The chain runs to 564 residues: uncharacterized protein (564 aa).

Polar residues predominate over residues M1–S17. The tract at residues M1 to S564 is disordered. Low complexity-rich tracts occupy residues S79–P97 and S114–T134. Positions R153 to S168 are enriched in polar residues. Over residues T170–T179 the composition is skewed to low complexity. Pro residues predominate over residues G250–A271. Over residues S272–S299 the composition is skewed to low complexity. Polar residues predominate over residues P318–R351. A compositionally biased stretch (low complexity) spans R378–S416. A compositionally biased stretch (polar residues) spans S467–S564.

This is an uncharacterized protein from Homo sapiens (Human).